Here is an 837-residue protein sequence, read N- to C-terminus: Katanin p80 WD40 repeat-containing subunit B1 homolog KTN80.4 (837 aa).

7 WD repeats span residues 14-54 (AHSA…AILS), 57-96 (GHSS…IVRT), 99-138 (GHRS…CIHT), 141-182 (GHTR…TEFK), 184-222 (HEGQ…LIGS), 225-265 (PETA…DGVD), and 267-304 (GWSR…TEPC). A DWD box motif is present at residues 115-131 (FFASGSLDTNLKIWDIR). Disordered stretches follow at residues 307 to 328 (GDTA…DPVV), 358 to 462 (GRLS…ANPV), and 501 to 614 (LQAA…LVIN). Composition is skewed to polar residues over residues 376 to 387 (IGRSSTSQNSES) and 412 to 450 (TFSS…TSRR). The span at 509-520 (SPSSRNNPDLPD) shows a compositional bias: low complexity. Basic and acidic residues-rich tracts occupy residues 553 to 563 (ATERSINDFRY) and 580 to 595 (RNHD…RSNR).

It belongs to the WD repeat KATNB1 family. In terms of assembly, component of KTN80-KTN1 complexes composed of a hexamer of KTN1-KTN80 heterodimers that sense microtubule (MT) geometry to confer precise MT severing. Interacts directly with AAA1/KTN1, and weakly with KTN80.1 and KTN80.3. Expressed in siliques, flowers, leaves, stems and roots.

It is found in the cytoplasm. Its subcellular location is the cytoskeleton. In terms of biological role, may participate in a complex which severs microtubules in an ATP-dependent manner. This activity may promote rapid reorganization of cellular microtubule arrays. Confers precision to microtubule (MT) severing by specific targeting of KTN1 to MT cleavage sites such as crossover or branching nucleation sites. Together with other KTN80s, regulates cell elongation by modulating MT organization. In Arabidopsis thaliana (Mouse-ear cress), this protein is Katanin p80 WD40 repeat-containing subunit B1 homolog KTN80.4.